Reading from the N-terminus, the 682-residue chain is Zinc finger protein 16 (682 aa).

Composition is skewed to basic and acidic residues over residues methionine 1–glutamate 10 and valine 113–arginine 125. 2 disordered regions span residues methionine 1–aspartate 33 and aspartate 112–glycine 134. The segment at tyrosine 62 to isoleucine 210 is necessary for transcription activation. A C2H2-type 1; degenerate zinc finger spans residues leucine 209–histidine 231. The C2H2-type 2; degenerate zinc-finger motif lies at phenylalanine 237–histidine 259. Residue lysine 253 forms a Glycyl lysine isopeptide (Lys-Gly) (interchain with G-Cter in SUMO2) linkage. C2H2-type zinc fingers lie at residues tyrosine 265–histidine 287, tyrosine 293–histidine 315, tyrosine 321–histidine 343, tyrosine 349–histidine 371, phenylalanine 377–histidine 399, tyrosine 405–histidine 427, tyrosine 433–histidine 455, and histidine 461–histidine 483. 2 required for nuclear localization regions span residues serine 268–arginine 393 and arginine 341–glycine 373. The interval serine 473–alanine 503 is required for nuclear localization. Lysine 487 is modified (N6-acetyllysine). 7 consecutive C2H2-type zinc fingers follow at residues tyrosine 489–histidine 511, tyrosine 517–histidine 539, tyrosine 545–histidine 567, histidine 573–histidine 595, tyrosine 601–histidine 623, tyrosine 629–histidine 651, and tyrosine 657–histidine 679.

This sequence belongs to the krueppel C2H2-type zinc-finger protein family. As to quaternary structure, interacts with INCA1; the interaction inhibits INCA1 activity and induces the cell cycle process.

The protein localises to the nucleus. Acts as a transcriptional activator. Promotes cell proliferation by facilitating the cell cycle phase transition from the S to G2/M phase. Involved in both the hemin- and phorbol myristate acetate (PMA)-induced erythroid and megakaryocytic differentiation, respectively. Also plays a role as an inhibitor of cell apoptosis. This is Zinc finger protein 16 (ZNF16) from Gorilla gorilla gorilla (Western lowland gorilla).